The chain runs to 445 residues: Histamine H3 receptor (445 aa).

The Extracellular segment spans residues 1–39 (MERAPPDGPLNASGALAGEAAAAGGARGFSAAWTAVLAA). N-linked (GlcNAc...) asparagine glycosylation is present at Asn11. Residues 40–60 (LMALLIVATVLGNALVMLAFV) form a helical membrane-spanning segment. At 61-70 (ADSSLRTQNN) the chain is on the cytoplasmic side. Residues 71 to 91 (FFLLNLAISDFLVGAFCIPLY) traverse the membrane as a helical segment. The Extracellular portion of the chain corresponds to 92-108 (VPYVLTGRWTFGRGLCK). A disulfide bond links Cys107 and Cys188. The helical transmembrane segment at 109-129 (LWLVVDYLLCTSSAFNIVLIS) threads the bilayer. The Cytoplasmic segment spans residues 130–156 (YDRFLSVTRAVSYRAQQGDTRRAVRKM). The helical transmembrane segment at 157–177 (LLVWVLAFLLYGPAILSWEYL) threads the bilayer. Residues 178-196 (SGGSSIPEGHCYAEFFYNW) lie on the Extracellular side of the membrane. The helical transmembrane segment at 197–217 (YFLITASTLEFFTPFLSVTFF) threads the bilayer. The Cytoplasmic segment spans residues 218–359 (NLSIYLNIQR…LSRDRKVAKS (142 aa)). 2 disordered regions span residues 237–260 (REAAGPEPPPEAQPSPPPPPGCWG) and 288–336 (EATL…LEKR). Over residues 242–257 (PEPPPEAQPSPPPPPG) the composition is skewed to pro residues. Residues 290-299 (TLGGGGGGGS) show a composition bias toward gly residues. Over residues 300–312 (VASPTSSSGSSSR) the composition is skewed to low complexity. A helical transmembrane segment spans residues 360 to 380 (LAVIVSIFGLCWAPYTLLMII). The Extracellular segment spans residues 381–395 (RAACHGHCVPDYWYE). Residues 396–416 (TSFWLLWANSAVNPVLYPLCH) form a helical membrane-spanning segment. Over 417–445 (HSFRRAFTKLLCPQKLKIQPHSSLEHCWK) the chain is Cytoplasmic. At Ser439 the chain carries Phosphoserine.

This sequence belongs to the G-protein coupled receptor 1 family. Expressed predominantly in the CNS, with the greatest expression in the thalamus and caudate nucleus. The various isoforms are mainly coexpressed in brain, but their relative expression level varies in a region-specific manner. Isoform 3 and isoform 7 are highly expressed in the thalamus, caudate nucleus and cerebellum while isoform 5 and isoform 6 show a poor expression. Isoform 5 and isoform 6 show a high expression in the amygdala, substantia nigra, cerebral cortex and hypothalamus. Isoform 7 is not found in hypothalamus or substantia nigra.

Its subcellular location is the cell membrane. The H3 subclass of histamine receptors could mediate the histamine signals in CNS and peripheral nervous system. Signals through the inhibition of adenylate cyclase and displays high constitutive activity (spontaneous activity in the absence of agonist). Agonist stimulation of isoform 3 neither modified adenylate cyclase activity nor induced intracellular calcium mobilization. This is Histamine H3 receptor (HRH3) from Homo sapiens (Human).